The following is a 345-amino-acid chain: Glycerol-3-phosphate dehydrogenase [NAD(P)+] (345 aa).

NADPH contacts are provided by S23, Y24, H44, and K118. Sn-glycerol 3-phosphate is bound by residues K118, G147, and T149. Residue A151 participates in NADPH binding. Positions 203, 256, 266, 267, and 268 each coordinate sn-glycerol 3-phosphate. K203 (proton acceptor) is an active-site residue. NADPH is bound at residue R267. Residues V291 and E293 each coordinate NADPH.

The protein belongs to the NAD-dependent glycerol-3-phosphate dehydrogenase family.

The protein resides in the cytoplasm. It catalyses the reaction sn-glycerol 3-phosphate + NAD(+) = dihydroxyacetone phosphate + NADH + H(+). It carries out the reaction sn-glycerol 3-phosphate + NADP(+) = dihydroxyacetone phosphate + NADPH + H(+). The protein operates within membrane lipid metabolism; glycerophospholipid metabolism. In terms of biological role, catalyzes the reduction of the glycolytic intermediate dihydroxyacetone phosphate (DHAP) to sn-glycerol 3-phosphate (G3P), the key precursor for phospholipid synthesis. The chain is Glycerol-3-phosphate dehydrogenase [NAD(P)+] from Vibrio campbellii (strain ATCC BAA-1116).